The chain runs to 163 residues: Phosphopantetheine adenylyltransferase (163 aa).

Thr-9 contributes to the substrate binding site. ATP is bound by residues 9–10 (TF) and His-17. Substrate contacts are provided by Lys-41, Thr-73, and Arg-87. Residues 88 to 90 (GLR), Glu-98, and 123 to 129 (FSFISSS) contribute to the ATP site.

This sequence belongs to the bacterial CoaD family. In terms of assembly, homohexamer. The cofactor is Mg(2+).

It localises to the cytoplasm. It catalyses the reaction (R)-4'-phosphopantetheine + ATP + H(+) = 3'-dephospho-CoA + diphosphate. It participates in cofactor biosynthesis; coenzyme A biosynthesis; CoA from (R)-pantothenate: step 4/5. Functionally, reversibly transfers an adenylyl group from ATP to 4'-phosphopantetheine, yielding dephospho-CoA (dPCoA) and pyrophosphate. The sequence is that of Phosphopantetheine adenylyltransferase from Desulfitobacterium hafniense (strain DSM 10664 / DCB-2).